Reading from the N-terminus, the 158-residue chain is NAD(P)H-quinone oxidoreductase subunit N (158 aa).

Belongs to the complex I NdhN subunit family. In terms of assembly, NDH-1 can be composed of about 15 different subunits; different subcomplexes with different compositions have been identified which probably have different functions.

The protein resides in the cellular thylakoid membrane. It carries out the reaction a plastoquinone + NADH + (n+1) H(+)(in) = a plastoquinol + NAD(+) + n H(+)(out). The catalysed reaction is a plastoquinone + NADPH + (n+1) H(+)(in) = a plastoquinol + NADP(+) + n H(+)(out). Functionally, NDH-1 shuttles electrons from an unknown electron donor, via FMN and iron-sulfur (Fe-S) centers, to quinones in the respiratory and/or the photosynthetic chain. The immediate electron acceptor for the enzyme in this species is believed to be plastoquinone. Couples the redox reaction to proton translocation, and thus conserves the redox energy in a proton gradient. Cyanobacterial NDH-1 also plays a role in inorganic carbon-concentration. The chain is NAD(P)H-quinone oxidoreductase subunit N from Nostoc punctiforme (strain ATCC 29133 / PCC 73102).